The following is a 476-amino-acid chain: ATP synthase subunit beta (476 aa).

Residue 154 to 161 participates in ATP binding; that stretch reads GGAGVGKT.

It belongs to the ATPase alpha/beta chains family. F-type ATPases have 2 components, CF(1) - the catalytic core - and CF(0) - the membrane proton channel. CF(1) has five subunits: alpha(3), beta(3), gamma(1), delta(1), epsilon(1). CF(0) has three main subunits: a(1), b(2) and c(9-12). The alpha and beta chains form an alternating ring which encloses part of the gamma chain. CF(1) is attached to CF(0) by a central stalk formed by the gamma and epsilon chains, while a peripheral stalk is formed by the delta and b chains.

It is found in the cell inner membrane. The enzyme catalyses ATP + H2O + 4 H(+)(in) = ADP + phosphate + 5 H(+)(out). In terms of biological role, produces ATP from ADP in the presence of a proton gradient across the membrane. The catalytic sites are hosted primarily by the beta subunits. The sequence is that of ATP synthase subunit beta from Nitrobacter winogradskyi (strain ATCC 25391 / DSM 10237 / CIP 104748 / NCIMB 11846 / Nb-255).